We begin with the raw amino-acid sequence, 276 residues long: Shikimate dehydrogenase (NADP(+)) (276 aa).

Residues 15–17 (SKS) and threonine 62 each bind shikimate. The active-site Proton acceptor is the lysine 66. Residue glutamate 78 coordinates NADP(+). Residues asparagine 87 and aspartate 103 each contribute to the shikimate site. Residues 128-132 (GAGGA) and isoleucine 217 contribute to the NADP(+) site. Tyrosine 219 is a shikimate binding site. Glycine 240 contributes to the NADP(+) binding site.

The protein belongs to the shikimate dehydrogenase family. Homodimer.

It catalyses the reaction shikimate + NADP(+) = 3-dehydroshikimate + NADPH + H(+). It functions in the pathway metabolic intermediate biosynthesis; chorismate biosynthesis; chorismate from D-erythrose 4-phosphate and phosphoenolpyruvate: step 4/7. In terms of biological role, involved in the biosynthesis of the chorismate, which leads to the biosynthesis of aromatic amino acids. Catalyzes the reversible NADPH linked reduction of 3-dehydroshikimate (DHSA) to yield shikimate (SA). This chain is Shikimate dehydrogenase (NADP(+)), found in Lysinibacillus sphaericus (strain C3-41).